The sequence spans 1351 residues: Bromodomain-containing protein 4A (1351 aa).

7 disordered regions span residues 1 to 23, 35 to 58, 168 to 244, 285 to 368, 478 to 638, 700 to 799, and 821 to 1334; these read MSSE…GIEG, PQPQ…QPKR, ETEL…RPPA, AAQP…DTKT, EPEE…PMSY, CLRK…LDSS, and PDLP…PSID. The Bromo 1 domain occupies 58–164; it reads RQTNQLQYLL…KLFLQKISEM (107 aa). Residues 208 to 219 show a composition bias toward low complexity; that stretch reads VKPPVTPVSKPS. Positions 220–235 are enriched in pro residues; the sequence is TPTPPTVTRAPTPPQT. Positions 327 to 343 are enriched in basic and acidic residues; the sequence is PRKENGRQIRPTKKTEV. Residues 349–359 show a composition bias toward pro residues; the sequence is PAPPVLHPQPA. A Bromo 2 domain is found at 366 to 475; sequence TKTSEQLRYC…DVFEMRFAKM (110 aa). Over residues 482–504 the composition is skewed to pro residues; the sequence is APAPVPSLAPGPPAPSIKGPPPT. The tract at residues 504–522 is NPS region; sequence TSSDSSSDSTSDSESSSDS. The segment covering 505-517 has biased composition (low complexity); it reads SSDSSSDSTSDSE. Residues 543-598 are BID region; it reads QLAALSQPQPNKPKKKEREKRKEKHKRKEEVEEPRKGRIREPPAKKPKKSVQGSGG. Over residues 554 to 569 the composition is skewed to basic residues; sequence KPKKKEREKRKEKHKR. Over residues 570-586 the composition is skewed to basic and acidic residues; it reads KEEVEEPRKGRIREPPA. Residues 607 to 621 show a composition bias toward pro residues; sequence PPPAPRPARPAPPSA. The 85-residue stretch at 624 to 708 folds into the NET domain; it reads ESSEEETQRC…SCLRKKRKSQ (85 aa). Basic and acidic residues predominate over residues 629–638; it reads ETQRCRPMSY. Residues 725-738 show a composition bias toward low complexity; it reads SSSESESSSESSTS. Positions 751–767 are enriched in basic residues; that stretch reads QKKKGHSGRESRKHHHP. Positions 788–799 are enriched in low complexity; that stretch reads PSYPLPSSLDSS. A compositionally biased stretch (pro residues) spans 872–890; the sequence is PAMPPSASPPPPAPQPPQQ. Residues 892 to 902 are compositionally biased toward basic residues; the sequence is HVHHHHHHHAQ. Over residues 927 to 953 the composition is skewed to polar residues; the sequence is LQKSQQPPTQSPIHSLLTSVKVQSQTP. Residues 968–983 are compositionally biased toward pro residues; it reads VYPPPPSTATTAPPPA. Composition is skewed to low complexity over residues 994–1003 and 1011–1028; these read PVVPQQLPAG and QQQQ…SHQQ. Residues 1051–1350 are C-terminal (CTD) region; that stretch reads RQQKQETYPG…LMEIFEQNLF (300 aa). A compositionally biased stretch (pro residues) spans 1075 to 1089; sequence PPVPPYPGLTHPPSP. 2 stretches are compositionally biased toward basic and acidic residues: residues 1150-1161 and 1176-1197; these read PRPDLKKMDGGR and PEKE…DIKI. A compositionally biased stretch (polar residues) spans 1214–1224; sequence PTSAGKSTSDS. The span at 1226-1284 shows a compositional bias: basic and acidic residues; it reads ELFRRQAREKEERERALKLQAEQAERVRREQDRMSRTREDDEVQDQARKAHEEARRRQE. Over residues 1301 to 1310 the composition is skewed to low complexity; it reads SPAQSSQPMM. Basic and acidic residues predominate over residues 1311–1323; the sequence is DQREMARKREQER.

It belongs to the BET family.

It localises to the nucleus. It is found in the chromosome. In terms of biological role, chromatin reader protein that recognizes and binds acetylated histones and plays a key role in transmission of epigenetic memory across cell divisions and transcription regulation. Remains associated with acetylated chromatin throughout the entire cell cycle and provides epigenetic memory for postmitotic G1 gene transcription by preserving acetylated chromatin status and maintaining high-order chromatin structure. During interphase, plays a key role in regulating the transcription of signal-inducible genes by associating with the P-TEFb complex and recruiting it to promoters. In Xenopus laevis (African clawed frog), this protein is Bromodomain-containing protein 4A (brd4-a).